The primary structure comprises 169 residues: PTS system glucose-specific EIIA component (169 aa).

Positions 39–143 (DVVFAEKIVG…STLTPVVISN (105 aa)) constitute a PTS EIIA type-1 domain. Residues H76 and H91 each contribute to the Zn(2+) site. The active-site Tele-phosphohistidine intermediate; for EIIA activity is the H91. H91 carries the post-translational modification Phosphohistidine; by HPr.

Heterodimer with glycerol kinase (glpk). The cofactor is Zn(2+).

The protein resides in the cytoplasm. The phosphoenolpyruvate-dependent sugar phosphotransferase system (sugar PTS), a major carbohydrate active transport system, catalyzes the phosphorylation of incoming sugar substrates concomitantly with their translocation across the cell membrane. The enzyme II complex composed of PtsG and Crr is involved in glucose transport. In Escherichia coli O6:H1 (strain CFT073 / ATCC 700928 / UPEC), this protein is PTS system glucose-specific EIIA component (crr).